The chain runs to 521 residues: Bifunctional purine biosynthesis protein PurH (521 aa).

The MGS-like domain occupies 1–150; that stretch reads MSEDRKAIKR…KNHPSVAVVT (150 aa).

Belongs to the PurH family.

It carries out the reaction (6R)-10-formyltetrahydrofolate + 5-amino-1-(5-phospho-beta-D-ribosyl)imidazole-4-carboxamide = 5-formamido-1-(5-phospho-D-ribosyl)imidazole-4-carboxamide + (6S)-5,6,7,8-tetrahydrofolate. The enzyme catalyses IMP + H2O = 5-formamido-1-(5-phospho-D-ribosyl)imidazole-4-carboxamide. It participates in purine metabolism; IMP biosynthesis via de novo pathway; 5-formamido-1-(5-phospho-D-ribosyl)imidazole-4-carboxamide from 5-amino-1-(5-phospho-D-ribosyl)imidazole-4-carboxamide (10-formyl THF route): step 1/1. Its pathway is purine metabolism; IMP biosynthesis via de novo pathway; IMP from 5-formamido-1-(5-phospho-D-ribosyl)imidazole-4-carboxamide: step 1/1. This Corynebacterium efficiens (strain DSM 44549 / YS-314 / AJ 12310 / JCM 11189 / NBRC 100395) protein is Bifunctional purine biosynthesis protein PurH.